Consider the following 204-residue polypeptide: MVCGGFACSKNCLCALNLLYTLVSLLLIGIAAWGIGFGLISSLRVVGVVIAVGIFLFLIALVGLIGAVKHHQVLLFFYMIILLLVFIVQFSVSCACLALNQEQQAQLLEVGWNNTASARDDIQRNLNCCGFRSFNPNDTCLASCVKSSHPCSPCAPIIGRYAGEVLRFVGGIGLFFSFTEILGVWLTYRYRNQKDPRANPSAFL.

Over Met-1–Leu-19 the chain is Cytoplasmic. The helical transmembrane segment at Tyr-20–Ile-40 threads the bilayer. Topologically, residues Ser-41–Arg-44 are extracellular. Residues Val-45 to Ile-65 traverse the membrane as a helical segment. At Gly-66–Gln-72 the chain is on the cytoplasmic side. The helical transmembrane segment at Val-73 to Ser-93 threads the bilayer. Residues Cys-94–Arg-167 are Extracellular-facing. Residues Asn-113 and Asn-137 are each glycosylated (N-linked (GlcNAc...) asparagine). Ser-143 is subject to Phosphoserine. The chain crosses the membrane as a helical span at residues Phe-168 to Tyr-188. The Cytoplasmic segment spans residues Arg-189 to Leu-204.

Belongs to the tetraspanin (TM4SF) family.

The protein localises to the membrane. The protein is Tetraspanin-13 (TSPAN13) of Bos taurus (Bovine).